The chain runs to 99 residues: Teretoxin Tsu6.4 (99 aa).

A signal peptide spans 1–21 (MRLLLILVLLTPVIVAFSVDE). Positions 22–53 (ELNNADGANAASFTADQEVRHKRNLFPAIARR) are excised as a propeptide.

Post-translationally, contains 3 disulfide bonds. In terms of tissue distribution, expressed by the venom duct.

The protein localises to the secreted. The chain is Teretoxin Tsu6.4 from Terebra subulata (Chocolate spotted auger).